A 113-amino-acid chain; its full sequence is Small ribosomal subunit protein mS41 (113 aa).

Residues 1–22 (MLILKRIFIIRNFIFPFSNCRY) constitute a mitochondrion transit peptide.

Belongs to the mitochondrion-specific ribosomal protein mS41 family. Component of the mitochondrial small ribosomal subunit (mt-SSU). Mature yeast 74S mitochondrial ribosomes consist of a small (37S) and a large (54S) subunit. The 37S small subunit contains a 15S ribosomal RNA (15S mt-rRNA) and at least 32 different proteins. The 54S large subunit contains a 21S rRNA (21S mt-rRNA) and at least 45 different proteins.

The protein localises to the mitochondrion. In terms of biological role, component of the mitochondrial ribosome (mitoribosome), a dedicated translation machinery responsible for the synthesis of mitochondrial genome-encoded proteins, including at least some of the essential transmembrane subunits of the mitochondrial respiratory chain. The mitoribosomes are attached to the mitochondrial inner membrane and translation products are cotranslationally integrated into the membrane. mS41 is involved in telomere length regulation. The chain is Small ribosomal subunit protein mS41 (fyv4) from Schizosaccharomyces pombe (strain 972 / ATCC 24843) (Fission yeast).